The sequence spans 428 residues: Immunoglobulin superfamily containing leucine-rich repeat protein (428 aa).

Residues 1 to 18 (MRALCLLCWAVLLNLVRA) form the signal peptide. The LRRNT domain maps to 19–50 (CPEPCDCGEKYGFQIADCAYRDLEGVPPGFPA). The N-linked (GlcNAc...) asparagine glycan is linked to N51. 5 LRR repeats span residues 51 to 72 (NVTT…AFRE), 75 to 98 (LLQS…APLS), 99 to 122 (HLKS…HNLS), 123 to 144 (ALQL…AFSS), and 147 to 168 (ALRS…TFAP). The LRRCT domain maps to 180–231 (NPFDCTCGIVWFKTWALASAVSIPEQDNIACTTPHVLKGIPLGRLPPLPCSA). Residues 232–343 (PSVQLSYQPS…GSAESSVNVA (112 aa)) form the Ig-like domain. C257 and C327 are oxidised to a cystine. An N-linked (GlcNAc...) asparagine glycan is attached at N309.

In terms of tissue distribution, detected in thyroid, heart, retina and spinal cord.

Its subcellular location is the secreted. In Mus musculus (Mouse), this protein is Immunoglobulin superfamily containing leucine-rich repeat protein (Islr).